A 111-amino-acid polypeptide reads, in one-letter code: Small ribosomal subunit protein mS38 (111 aa).

The span at 82–99 (RKRKKKMKKHKLRKRRKR) shows a compositional bias: basic residues. Residues 82 to 111 (RKRKKKMKKHKLRKRRKREKAERRKLSQGR) form a disordered region. Basic and acidic residues predominate over residues 100–111 (EKAERRKLSQGR).

The protein belongs to the mitochondrion-specific ribosomal protein mS38 family. Component of the mitochondrial small ribosomal subunit (mt-SSU). Mature yeast 74S mitochondrial ribosomes consist of a small (37S) and a large (54S) subunit. The 37S small subunit contains a 15S ribosomal RNA (15S mt-rRNA) and 34 different proteins. The 54S large subunit contains a 21S rRNA (21S mt-rRNA) and 46 different proteins.

It localises to the mitochondrion. Its subcellular location is the mitochondrion inner membrane. Its function is as follows. Component of the mitochondrial ribosome (mitoribosome), a dedicated translation machinery responsible for the synthesis of mitochondrial genome-encoded proteins, including at least some of the essential transmembrane subunits of the mitochondrial respiratory chain. The mitoribosomes are attached to the mitochondrial inner membrane and translation products are cotranslationally integrated into the membrane. mS38 is also involved in the splicing of the COX1 mRNA. This chain is Small ribosomal subunit protein mS38 (QRI5), found in Saccharomyces cerevisiae (strain ATCC 204508 / S288c) (Baker's yeast).